Reading from the N-terminus, the 315-residue chain is Protoheme IX farnesyltransferase (315 aa).

Transmembrane regions (helical) follow at residues 32 to 52, 53 to 73, 93 to 113, 120 to 140, 153 to 173, 180 to 200, 226 to 246, 249 to 269, and 295 to 315; these read VMSL…GHMN, PVLA…SGAL, IPAG…LSAF, LMVN…YAVI, IVIG…AATG, LVLF…LSLF, ALFY…MGFA, FYGV…WRLW, and IFAV…FGVF.

It belongs to the UbiA prenyltransferase family. Protoheme IX farnesyltransferase subfamily.

The protein resides in the cell inner membrane. The catalysed reaction is heme b + (2E,6E)-farnesyl diphosphate + H2O = Fe(II)-heme o + diphosphate. It participates in porphyrin-containing compound metabolism; heme O biosynthesis; heme O from protoheme: step 1/1. Converts heme B (protoheme IX) to heme O by substitution of the vinyl group on carbon 2 of heme B porphyrin ring with a hydroxyethyl farnesyl side group. The polypeptide is Protoheme IX farnesyltransferase (Brucella suis (strain ATCC 23445 / NCTC 10510)).